The following is an 890-amino-acid chain: Translation initiation factor IF-2 (890 aa).

The interval 50–304 (LRQGSPEQEE…LQQEFERPTA (255 aa)) is disordered. Basic and acidic residues-rich tracts occupy residues 112-125 (KRSD…RKQE), 136-147 (RALEQEEAKREE), and 217-262 (ALKE…QEAK). The tr-type G domain occupies 390–559 (GRAPVVTVMG…VLQAELQELK (170 aa)). The G1 stretch occupies residues 399 to 406 (GHVDHGKT). GTP is bound at residue 399–406 (GHVDHGKT). The G2 stretch occupies residues 424–428 (GITQH). The interval 445-448 (DTPG) is G3. Residues 445–449 (DTPGH) and 499–502 (NKMD) contribute to the GTP site. The G4 stretch occupies residues 499–502 (NKMD). Residues 535–537 (SAM) form a G5 region.

It belongs to the TRAFAC class translation factor GTPase superfamily. Classic translation factor GTPase family. IF-2 subfamily.

The protein resides in the cytoplasm. One of the essential components for the initiation of protein synthesis. Protects formylmethionyl-tRNA from spontaneous hydrolysis and promotes its binding to the 30S ribosomal subunits. Also involved in the hydrolysis of GTP during the formation of the 70S ribosomal complex. The polypeptide is Translation initiation factor IF-2 (Halorhodospira halophila (strain DSM 244 / SL1) (Ectothiorhodospira halophila (strain DSM 244 / SL1))).